A 362-amino-acid chain; its full sequence is 3-dehydroquinate synthase (362 aa).

NAD(+)-binding positions include 72–77 (SGEEAK), 106–110 (GVTGD), 130–131 (TT), Lys142, and Lys151. 3 residues coordinate Zn(2+): Glu184, His246, and His263.

Belongs to the sugar phosphate cyclases superfamily. Dehydroquinate synthase family. Co(2+) is required as a cofactor. Requires Zn(2+) as cofactor. The cofactor is NAD(+).

The protein resides in the cytoplasm. It carries out the reaction 7-phospho-2-dehydro-3-deoxy-D-arabino-heptonate = 3-dehydroquinate + phosphate. It functions in the pathway metabolic intermediate biosynthesis; chorismate biosynthesis; chorismate from D-erythrose 4-phosphate and phosphoenolpyruvate: step 2/7. Its function is as follows. Catalyzes the conversion of 3-deoxy-D-arabino-heptulosonate 7-phosphate (DAHP) to dehydroquinate (DHQ). This Bacillus velezensis (strain DSM 23117 / BGSC 10A6 / LMG 26770 / FZB42) (Bacillus amyloliquefaciens subsp. plantarum) protein is 3-dehydroquinate synthase.